The following is a 576-amino-acid chain: Putative export ATP-binding/permease protein RP696 (576 aa).

In terms of domain architecture, ABC transmembrane type-1 spans L20 to L303. 6 helical membrane-spanning segments follow: residues I21–F41, I61–F81, F135–F155, F158–F178, A242–I262, and I277–L297. The 237-residue stretch at I336–E572 folds into the ABC transporter domain. Position 371-378 (G371–S378) interacts with ATP.

It belongs to the ABC transporter superfamily. In terms of assembly, homodimer.

It localises to the cell inner membrane. Functionally, part of an ABC transporter complex. Transmembrane domains (TMD) form a pore in the inner membrane and the ATP-binding domain (NBD) is responsible for energy generation. The polypeptide is Putative export ATP-binding/permease protein RP696 (Rickettsia prowazekii (strain Madrid E)).